Reading from the N-terminus, the 509-residue chain is Bifunctional purine biosynthesis protein PurH (509 aa).

Residues 1–144 enclose the MGS-like domain; it reads MKRALISVSD…KNYAAVTVVV (144 aa).

This sequence belongs to the PurH family.

It catalyses the reaction (6R)-10-formyltetrahydrofolate + 5-amino-1-(5-phospho-beta-D-ribosyl)imidazole-4-carboxamide = 5-formamido-1-(5-phospho-D-ribosyl)imidazole-4-carboxamide + (6S)-5,6,7,8-tetrahydrofolate. The catalysed reaction is IMP + H2O = 5-formamido-1-(5-phospho-D-ribosyl)imidazole-4-carboxamide. It participates in purine metabolism; IMP biosynthesis via de novo pathway; 5-formamido-1-(5-phospho-D-ribosyl)imidazole-4-carboxamide from 5-amino-1-(5-phospho-D-ribosyl)imidazole-4-carboxamide (10-formyl THF route): step 1/1. The protein operates within purine metabolism; IMP biosynthesis via de novo pathway; IMP from 5-formamido-1-(5-phospho-D-ribosyl)imidazole-4-carboxamide: step 1/1. In Listeria welshimeri serovar 6b (strain ATCC 35897 / DSM 20650 / CCUG 15529 / CIP 8149 / NCTC 11857 / SLCC 5334 / V8), this protein is Bifunctional purine biosynthesis protein PurH.